A 133-amino-acid chain; its full sequence is ATP synthase epsilon chain (133 aa).

Belongs to the ATPase epsilon chain family. F-type ATPases have 2 components, CF(1) - the catalytic core - and CF(0) - the membrane proton channel. CF(1) has five subunits: alpha(3), beta(3), gamma(1), delta(1), epsilon(1). CF(0) has three main subunits: a, b and c.

The protein localises to the cell inner membrane. Its function is as follows. Produces ATP from ADP in the presence of a proton gradient across the membrane. The polypeptide is ATP synthase epsilon chain (Desulfosudis oleivorans (strain DSM 6200 / JCM 39069 / Hxd3) (Desulfococcus oleovorans)).